The following is a 530-amino-acid chain: 4,4'-diapolycopene aldehyde oxidase (530 aa).

Catalysis depends on residues glutamate 234 and cysteine 268.

Belongs to the aldehyde dehydrogenase family.

It catalyses the reaction all-trans-4,4'-diapolycopen-4-al + A + H2O = all-trans-4,4'-diapolycopen-4-oate + AH2 + H(+). The catalysed reaction is all-trans-4,4'-diapolycopene-4,4'-dial + 2 A + 2 H2O = all-trans-4,4'-diapolycopene-4,4'-dioate + 2 AH2 + 2 H(+). It participates in carotenoid biosynthesis. In terms of biological role, involved in the biosynthesis of C30 carotenoids. Catalyzes the oxidation of 4,4'-diapolycopene-4,4'-dial to yield 4,4'-diapolycopene-4,4'-dioic acid. Also able to catalyze the oxidation of 4,4'-diapolycopen-4-al to yield 4,4'-diapolycopen-4-oic acid. This chain is 4,4'-diapolycopene aldehyde oxidase, found in Methylomonas sp.